Reading from the N-terminus, the 231-residue chain is AA9 family lytic polysaccharide monooxygenase C (231 aa).

A signal peptide spans 1 to 18 (MKSGLLFTTASLALTASA). His-19 serves as a coordination point for Cu(2+). Cysteines 60 and 179 form a disulfide. 2 N-linked (GlcNAc...) asparagine glycosylation sites follow: Asn-69 and Asn-143. Residues His-165 and Gln-174 each contribute to the O2 site. Tyr-176 lines the Cu(2+) pocket.

This sequence belongs to the polysaccharide monooxygenase AA9 family. Cu(2+) is required as a cofactor.

The protein resides in the secreted. The catalysed reaction is [(1-&gt;4)-beta-D-glucosyl]n+m + reduced acceptor + O2 = 4-dehydro-beta-D-glucosyl-[(1-&gt;4)-beta-D-glucosyl]n-1 + [(1-&gt;4)-beta-D-glucosyl]m + acceptor + H2O.. Lytic polysaccharide monooxygenase (LPMO) that depolymerizes crystalline and amorphous polysaccharides via the oxidation of scissile alpha- or beta-(1-4)-glycosidic bonds, yielding C1 oxidation products. Catalysis by LPMOs requires the reduction of the active-site copper from Cu(II) to Cu(I) by a reducing agent and H(2)O(2) or O(2) as a cosubstrate. The polypeptide is AA9 family lytic polysaccharide monooxygenase C (Emericella nidulans (strain FGSC A4 / ATCC 38163 / CBS 112.46 / NRRL 194 / M139) (Aspergillus nidulans)).